We begin with the raw amino-acid sequence, 403 residues long: Envelope glycoprotein D (403 aa).

The N-terminal stretch at Met-1–Ala-34 is a signal peptide. Residues Met-35 to Gln-357 lie on the Virion surface side of the membrane. 2 N-linked (GlcNAc...) asparagine; by host glycosylation sites follow: Asn-87 and Asn-138. 3 cysteine pairs are disulfide-bonded: Cys-88–Cys-209, Cys-127–Cys-222, and Cys-139–Cys-148. Residues Asn-230 and Asn-306 are each glycosylated (N-linked (GlcNAc...) asparagine; by host). The helical transmembrane segment at Ile-358–Ile-378 threads the bilayer. Topologically, residues Trp-379 to Leu-403 are intravirion.

It belongs to the herpesviridae glycoprotein D family.

The protein localises to the virion membrane. In terms of biological role, envelope glycoprotein that binds to host cell entry receptors, promoting the virus entry into host cells. May trigger fusion with host membrane, by recruiting the fusion machinery composed of gB and gH/gL. The polypeptide is Envelope glycoprotein D (MDV094) (Gallus gallus (Chicken)).